We begin with the raw amino-acid sequence, 256 residues long: Nuclear shuttle protein (256 aa).

The tract at residues 1-53 (MYPSRNKRGSYFNQRRQYSRNHVWKRPTAAKRHDWKRRPSNTSKPNDEPKMSA) is disordered. Residues 17–39 (QYSRNHVWKRPTAAKRHDWKRRP) show a composition bias toward basic residues. A Bipartite nuclear localization signal motif is present at residues 21-42 (NHVWKRPTAAKRHDWKRRPSNT). A Nuclear localization signal motif is present at residues 81 to 96 (DLGRSEPNRSRSYIRL). An interaction with Arabidopsis thaliana NSI protein region spans residues 150–187 (ELFGARIHSHGNLSVTPALKDRYYIRHVCKRVLSVEKD).

Belongs to the begomovirus nuclear shuttle protein family. Binds to single-stranded and double-stranded viral DNA. Interacts with the host nuclear shuttle interacting (NSI) protein. This interaction may allow NSP to recruit NSI monomers to the viral genome and thus regulate nuclear export of viral genome by NSP.

The protein localises to the host nucleus. The protein resides in the host cytoplasm. Its subcellular location is the host cell membrane. Its function is as follows. Binds to the genomic viral ssDNA, shuttles it into and out of the cell nucleus. Begomoviruses use 2 proteins to transport their DNA from cell to cell. The nuclear shuttle protein (NSP) shuttles it between nucleus and cytoplasm and the movement protein (MP) probably transports the DNA-NSP complex to the cell periphery and facilitates movement across the cell wall. The protein is Nuclear shuttle protein of Abutilon mosaic virus (isolate West India) (AbMV).